Here is a 608-residue protein sequence, read N- to C-terminus: Mitochondrial import receptor subunit TOM70 (608 aa).

At Ala2 the chain carries N-acetylalanine. The Mitochondrial intermembrane portion of the chain corresponds to 2 to 38 (AASKPVEAAVVAAAVPSSGSGVGGGGTAGPGTGGLPR). The helical transmembrane segment at 39 to 59 (WQLALAVGAPLLLGAGAIYLW) threads the bilayer. Topologically, residues 60 to 608 (SRQQRRREAR…KKYGLKPPTL (549 aa)) are cytoplasmic. Positions 67–107 (EARGRGDASGLKRNSERKTPEGRASPAPGSGHPEGPGAHLD) are disordered. Arg71 bears the Omega-N-methylarginine mark. Phosphoserine is present on residues Ser91, Ser96, and Ser110. TPR repeat units lie at residues 114–147 (AQAA…CPTE) and 153–186 (STFY…NPKY). N6-acetyllysine is present on Lys185. Residue Lys275 forms a Glycyl lysine isopeptide (Lys-Gly) (interchain with G-Cter in SUMO2) linkage. TPR repeat units follow at residues 294–327 (ENSG…EGKY), 329–362 (AEAL…KEAN), 367–400 (ANAL…DPQN), 401–434 (ADVY…RPES), 440–475 (QKCF…FPRC), 476–509 (AEGY…EPDN), 511–544 (TTYV…DNKC), and 545–578 (DFAY…AKSE). Position 434 is a phosphoserine (Ser434).

Belongs to the Tom70 family. In terms of assembly, forms part of the preprotein translocase complex of the outer mitochondrial membrane (TOM complex) which consists of at least 7 different proteins (TOMM5, TOMM6, TOMM7, TOMM20, TOMM22, TOMM40 and TOMM70). Interacts with CAPN8. Interacts with TRADD, TRAF6 and STING. Interacts with MAVS; the interaction is enhanced by Sendai virus infection. Interacts with HSPA8 and HSP90AA1; both interactions are required for preprotein mitochondrial import. The interaction with HSP90AA1 is direct and mediates the association of TOMM70 with IRF3 and TBK1. Upon mitochondrial depolarization, interacts with PINK1; the interaction is required for PINK1-TOM-TIM23 supercomplex formation which is critical for PINK1 stabilization at the outer mitochondrial membrane, kinase activation and downstream mitophagy. As to quaternary structure, (Microbial infection) Interacts (via C-terminus) with SARS coronaviru/SARS-CoV and SARS coronavirus-2/SARS-CoV-2 virus protein ORF9b. (Microbial infection) Interacts with parasite T.gondii RH strain MAF1b1; the interaction impairs TOMM70 import activity, enables the parasite to associate with the host mitochondria and facilitates the association of MAF1b1 with MIB complex component SAMM50, promoting the formation of SPOTs (structures positive for outer mitochondrial membrane (OMM)); the interaction is probably indirect.

The protein resides in the mitochondrion outer membrane. Functionally, acts as a receptor of the preprotein translocase complex of the outer mitochondrial membrane (TOM complex). Recognizes and mediates the translocation of mitochondrial preproteins from the cytosol into the mitochondria in a chaperone dependent manner. Mediates TBK1 and IRF3 activation induced by MAVS in response to Sendai virus infection and promotes host antiviral responses during virus infection. Upon Sendai virus infection, recruits HSP90AA1:IRF3:BAX in mitochondrion and the complex induces apoptosis. The polypeptide is Mitochondrial import receptor subunit TOM70 (Homo sapiens (Human)).